The chain runs to 569 residues: CTP synthase (569 aa).

Residues 1–276 (MNQATPTKHV…DAYLVRRLDL (276 aa)) are amidoligase domain. Residue Ser-18 coordinates CTP. A UTP-binding site is contributed by Ser-18. ATP is bound by residues 19–24 (SLGKGL) and Asp-76. Asp-76 and Glu-150 together coordinate Mg(2+). CTP contacts are provided by residues 157–159 (DIE), 197–202 (KTKPTQ), and Lys-233. UTP contacts are provided by residues 197–202 (KTKPTQ) and Lys-233. One can recognise a Glutamine amidotransferase type-1 domain in the interval 301–550 (TVALVGKYVD…VGAAIERQRE (250 aa)). Gly-364 provides a ligand contact to L-glutamine. Cys-391 (nucleophile; for glutamine hydrolysis) is an active-site residue. L-glutamine-binding positions include 392 to 395 (LGLQ), Glu-415, and Arg-476. Catalysis depends on residues His-523 and Glu-525.

The protein belongs to the CTP synthase family. As to quaternary structure, homotetramer.

The enzyme catalyses UTP + L-glutamine + ATP + H2O = CTP + L-glutamate + ADP + phosphate + 2 H(+). The catalysed reaction is L-glutamine + H2O = L-glutamate + NH4(+). It carries out the reaction UTP + NH4(+) + ATP = CTP + ADP + phosphate + 2 H(+). It participates in pyrimidine metabolism; CTP biosynthesis via de novo pathway; CTP from UDP: step 2/2. With respect to regulation, allosterically activated by GTP, when glutamine is the substrate; GTP has no effect on the reaction when ammonia is the substrate. The allosteric effector GTP functions by stabilizing the protein conformation that binds the tetrahedral intermediate(s) formed during glutamine hydrolysis. Inhibited by the product CTP, via allosteric rather than competitive inhibition. Functionally, catalyzes the ATP-dependent amination of UTP to CTP with either L-glutamine or ammonia as the source of nitrogen. Regulates intracellular CTP levels through interactions with the four ribonucleotide triphosphates. This is CTP synthase from Nocardioides sp. (strain ATCC BAA-499 / JS614).